Here is a 116-residue protein sequence, read N- to C-terminus: Galanin-like peptide (116 aa).

The signal sequence occupies residues 1–24 (MAPPSVPLVLLLVLLLSLAETPAS). A propeptide spanning residues 87-116 (NVMETFAKPEIGDLGMLSMKIPKEEDVLKS) is cleaved from the precursor.

It belongs to the galanin family. Isoform 2 is found in ganglia of ganglioneuroma and ganglioneuroblastoma, as well as in differentiated tumor cells of neuroblastoma tissues. Not found in undifferentiated neuroblasts. Isoform 2 is found in the skin, in pericytes covering microvascular arterioles and venules on their abluminal surfaces. In larger vessels, isoform 2 is expressed in layers of smooth muscle cells. Isoform 2 is not detected in endothelial cells.

The protein resides in the secreted. Functionally, hypothalamic neuropeptide which binds to the G-protein-coupled galanin receptors (GALR1, GALR2 and GALR3). Involved in a large number of putative physiological functions in CNS homeostatic processes, including the regulation of gonadotropin-releasing hormone secretion. Its function is as follows. Exhibits potent and dose-dependent vasoconstrictor and anti-edema activity in the cutaneous microvasculature, a physiologic effects which does not appear to be mediated via GALR1 or GALR2. Exhibits antimicrobial activity against Gram-negative bacterias, inducing bacterial membrane blebbing. This Homo sapiens (Human) protein is Galanin-like peptide (GALP).